The following is a 95-amino-acid chain: Corticostatin-3 (95 aa).

The first 19 residues, 1-19, serve as a signal peptide directing secretion; it reads MRTLALLAAILLVALQAQA. A propeptide spanning residues 20–62 is cleaved from the precursor; that stretch reads EHVSVSIDEVVDQQPPQAEDQDVAIYVKEHESSALEALGVKAG. Cystine bridges form between C65/C93, C67/C82, and C72/C92.

Belongs to the alpha-defensin family.

It localises to the secreted. Functionally, this peptide has antibiotic, anti-fungi and antiviral activity. It also inhibits corticotropin (ACTH) stimulated corticosterone production. This is Corticostatin-3 from Oryctolagus cuniculus (Rabbit).